The sequence spans 101 residues: DNA-binding protein Fis (101 aa).

The segment at residues 77–96 is a DNA-binding region (H-T-H motif); sequence QTRAANMLGINRGTLRKKLK.

It belongs to the transcriptional regulatory Fis family. As to quaternary structure, homodimer.

In terms of biological role, activates ribosomal RNA transcription. Plays a direct role in upstream activation of rRNA promoters. The protein is DNA-binding protein Fis of Shewanella amazonensis (strain ATCC BAA-1098 / SB2B).